The primary structure comprises 289 residues: ADP-dependent (S)-NAD(P)H-hydrate dehydratase (289 aa).

One can recognise a YjeF C-terminal domain in the interval 9–286 (VTAAALRAQP…PEVPGILDRL (278 aa)). Residues alanine 44 and histidine 160 each contribute to the (6S)-NADPHX site. Residues 197 to 201 (KGADS) and glycine 226 contribute to the AMP site. Position 227 (aspartate 227) interacts with (6S)-NADPHX.

The protein belongs to the NnrD/CARKD family. Homotetramer. It depends on Mg(2+) as a cofactor.

It catalyses the reaction (6S)-NADHX + ADP = AMP + phosphate + NADH + H(+). The catalysed reaction is (6S)-NADPHX + ADP = AMP + phosphate + NADPH + H(+). Its function is as follows. Catalyzes the dehydration of the S-form of NAD(P)HX at the expense of ADP, which is converted to AMP. Together with NAD(P)HX epimerase, which catalyzes the epimerization of the S- and R-forms, the enzyme allows the repair of both epimers of NAD(P)HX, a damaged form of NAD(P)H that is a result of enzymatic or heat-dependent hydration. The protein is ADP-dependent (S)-NAD(P)H-hydrate dehydratase of Xanthomonas campestris pv. campestris (strain ATCC 33913 / DSM 3586 / NCPPB 528 / LMG 568 / P 25).